A 208-amino-acid polypeptide reads, in one-letter code: Uracil phosphoribosyltransferase (208 aa).

5-phospho-alpha-D-ribose 1-diphosphate is bound by residues Arg78, Arg103, and Asp130 to Ser138. Uracil contacts are provided by residues Ile193 and Gly198 to Ala200. 5-phospho-alpha-D-ribose 1-diphosphate is bound at residue Asp199.

This sequence belongs to the UPRTase family. It depends on Mg(2+) as a cofactor.

The enzyme catalyses UMP + diphosphate = 5-phospho-alpha-D-ribose 1-diphosphate + uracil. Its pathway is pyrimidine metabolism; UMP biosynthesis via salvage pathway; UMP from uracil: step 1/1. With respect to regulation, allosterically activated by GTP. Functionally, catalyzes the conversion of uracil and 5-phospho-alpha-D-ribose 1-diphosphate (PRPP) to UMP and diphosphate. The polypeptide is Uracil phosphoribosyltransferase (Shewanella halifaxensis (strain HAW-EB4)).